The chain runs to 486 residues: Vacuolar protein sorting-associated protein 73 (486 aa).

The Cytoplasmic segment spans residues 1–26; that stretch reads MNRILSSASLLSNVSMPRQNKHKITK. The chain crosses the membrane as a helical span at residues 27–47; the sequence is ALCYAIIVASIGSIQFGYHLS. The Mitochondrial intermembrane portion of the chain corresponds to 48 to 90; it reads ELNAPQQVLSCSEFDIPMEGYPYDRTWLGKRGYKQCIPLNDEQ. Residues 91–111 form a helical membrane-spanning segment; sequence IGIVTSVFCIGGILGSYFATS. The Cytoplasmic portion of the chain corresponds to 112–119; that stretch reads LANIYGRK. A helical transmembrane segment spans residues 120–140; sequence FSSLINCTLNIVGSLIIFNSN. Over 141–146 the chain is Mitochondrial intermembrane; sequence SYRGLI. A helical transmembrane segment spans residues 147–167; that stretch reads IGRILVGISCGSLIVIIPLFI. At 168–178 the chain is on the cytoplasmic side; sequence KEVAPSGWEGL. A helical membrane pass occupies residues 179-199; the sequence is LGSMTQICIRLGVLLTQGIAL. The Mitochondrial intermembrane portion of the chain corresponds to 200–208; the sequence is PLTDSYRWR. Residues 209–229 traverse the membrane as a helical segment; the sequence is WILFGSFLIAVLNFFMWFIVD. Over 230-305 the chain is Cytoplasmic; sequence ESPKWLLAHG…RDRTNVKSRH (76 aa). The chain crosses the membrane as a helical span at residues 306–326; that stretch reads VITVLLFGQQFCGINSIVLYG. Residues 327 to 342 are Mitochondrial intermembrane-facing; sequence TKIISQLYPQHAIRIN. Residues 343-363 traverse the membrane as a helical segment; sequence FFISMVNVLVTILVSLLIHSL. Topologically, residues 364 to 366 are cytoplasmic; the sequence is PRK. A helical membrane pass occupies residues 367–387; it reads PLLMTSTVLVSVTAFIMGIAM. Over 388-396 the chain is Mitochondrial intermembrane; that stretch reads NHNKMNLLI. Residues 397–417 traverse the membrane as a helical segment; that stretch reads VFSFIYMGVFTMGLNPLPFII. At 418–432 the chain is on the cytoplasmic side; it reads MREVSKPQDMVLAQR. Residues 433–453 form a helical membrane-spanning segment; that stretch reads YGTICNWVGTFIIAYTFPIIH. A topological domain (mitochondrial intermembrane) is located at residue Asp-454. Residues 455-475 form a helical membrane-spanning segment; the sequence is VLSGYVFIIFAIIACSISAFI. Residues 476–486 lie on the Cytoplasmic side of the membrane; the sequence is WKKVPETKRSG.

Belongs to the major facilitator superfamily. Sugar transporter (TC 2.A.1.1) family.

Its subcellular location is the mitochondrion membrane. In terms of biological role, may be involved in vacuolar protein sorting. The chain is Vacuolar protein sorting-associated protein 73 (VPS73) from Saccharomyces cerevisiae (strain ATCC 204508 / S288c) (Baker's yeast).